The sequence spans 141 residues: Nucleoside triphosphatase NudI (141 aa).

In terms of domain architecture, Nudix hydrolase spans methionine 1 to leucine 141. A Nudix box motif is present at residues glycine 38–glycine 59.

It belongs to the Nudix hydrolase family. NudI subfamily. In terms of assembly, monomer. Mg(2+) serves as cofactor.

It carries out the reaction a ribonucleoside 5'-triphosphate + H2O = a ribonucleoside 5'-phosphate + diphosphate + H(+). The enzyme catalyses a 2'-deoxyribonucleoside 5'-triphosphate + H2O = a 2'-deoxyribonucleoside 5'-phosphate + diphosphate + H(+). It catalyses the reaction dUTP + H2O = dUMP + diphosphate + H(+). The catalysed reaction is dTTP + H2O = dTMP + diphosphate + H(+). It carries out the reaction dCTP + H2O = dCMP + diphosphate + H(+). In terms of biological role, catalyzes the hydrolysis of nucleoside triphosphates, with a preference for pyrimidine deoxynucleoside triphosphates (dUTP, dTTP and dCTP). The sequence is that of Nucleoside triphosphatase NudI from Salmonella newport (strain SL254).